Consider the following 884-residue polypeptide: Alanine--tRNA ligase (884 aa).

Residues H572, H576, C673, and H677 each coordinate Zn(2+).

The protein belongs to the class-II aminoacyl-tRNA synthetase family. Zn(2+) is required as a cofactor.

Its subcellular location is the cytoplasm. The catalysed reaction is tRNA(Ala) + L-alanine + ATP = L-alanyl-tRNA(Ala) + AMP + diphosphate. Catalyzes the attachment of alanine to tRNA(Ala) in a two-step reaction: alanine is first activated by ATP to form Ala-AMP and then transferred to the acceptor end of tRNA(Ala). Also edits incorrectly charged Ser-tRNA(Ala) and Gly-tRNA(Ala) via its editing domain. The polypeptide is Alanine--tRNA ligase (Xylella fastidiosa (strain 9a5c)).